A 366-amino-acid chain; its full sequence is Phenylalanine--tRNA ligase alpha subunit (366 aa).

Residue E259 coordinates Mg(2+).

The protein belongs to the class-II aminoacyl-tRNA synthetase family. Phe-tRNA synthetase alpha subunit type 1 subfamily. Tetramer of two alpha and two beta subunits. The cofactor is Mg(2+).

It localises to the cytoplasm. It carries out the reaction tRNA(Phe) + L-phenylalanine + ATP = L-phenylalanyl-tRNA(Phe) + AMP + diphosphate + H(+). The polypeptide is Phenylalanine--tRNA ligase alpha subunit (Erythrobacter litoralis (strain HTCC2594)).